Reading from the N-terminus, the 368-residue chain is Phosphate acyltransferase (368 aa).

This sequence belongs to the PlsX family. As to quaternary structure, homodimer. Probably interacts with PlsY.

The protein resides in the cytoplasm. The enzyme catalyses a fatty acyl-[ACP] + phosphate = an acyl phosphate + holo-[ACP]. The protein operates within lipid metabolism; phospholipid metabolism. Functionally, catalyzes the reversible formation of acyl-phosphate (acyl-PO(4)) from acyl-[acyl-carrier-protein] (acyl-ACP). This enzyme utilizes acyl-ACP as fatty acyl donor, but not acyl-CoA. This chain is Phosphate acyltransferase, found in Granulibacter bethesdensis (strain ATCC BAA-1260 / CGDNIH1).